Here is a 295-residue protein sequence, read N- to C-terminus: Oxidoreductase AN1597 (295 aa).

Belongs to the asaB hydroxylase/desaturase family.

It functions in the pathway secondary metabolite biosynthesis; terpenoid biosynthesis. Oxidoreductase; part of the gene cluster that mediates the biosynthesis of the diterpene ent-pimara-8(14),15-diene (PD). Within the cluster, the HMG-CoA reductase AN1593 functions in the mevalonate pathway, which produces isoprenoid precursors. The geranylgeranyl pyrophosphate (GGPP) synthase AN1592 is needed in the formation of GGPP, the precursor for diterpenes. Lastly, the pimaradiene synthase pbcA performs the 2 cyclization steps that convert GGPP to ent-pimara-8(14),15-diene. The putative roles of the remaining cluster enzymes in ent-pimara-8(14),15-diene biosynthesis is unclear. The cytochrome P450 monooxygenase AN1598, the glutathione S-transferase AN1595, the oxidoreductases AN1596 and AN1597 probably function as decorative enzymes. It is possible that in biological conditions the compound is oxidized to ent-pimara-8(14),15-dien-19-oic acid, which is a bioactive diterpene compound predominant in many plant extracts. This is Oxidoreductase AN1597 from Emericella nidulans (strain FGSC A4 / ATCC 38163 / CBS 112.46 / NRRL 194 / M139) (Aspergillus nidulans).